A 229-amino-acid polypeptide reads, in one-letter code: Ribosomal RNA large subunit methyltransferase E (229 aa).

A disordered region spans residues 1–20 (MSRAGNGGRQRIKTAKGRSA). Residues glycine 75, tryptophan 77, aspartate 94, aspartate 110, and aspartate 134 each contribute to the S-adenosyl-L-methionine site. Lysine 174 serves as the catalytic Proton acceptor.

It belongs to the class I-like SAM-binding methyltransferase superfamily. RNA methyltransferase RlmE family.

It localises to the cytoplasm. The enzyme catalyses uridine(2552) in 23S rRNA + S-adenosyl-L-methionine = 2'-O-methyluridine(2552) in 23S rRNA + S-adenosyl-L-homocysteine + H(+). Specifically methylates the uridine in position 2552 of 23S rRNA at the 2'-O position of the ribose in the fully assembled 50S ribosomal subunit. This chain is Ribosomal RNA large subunit methyltransferase E, found in Rhizorhabdus wittichii (strain DSM 6014 / CCUG 31198 / JCM 15750 / NBRC 105917 / EY 4224 / RW1) (Sphingomonas wittichii).